Here is a 356-residue protein sequence, read N- to C-terminus: MSQATFAKELTAKFAQLWTEKTKRPLPPVNQAMMQRLRQGQRQSGPNEVFSRVSALFRDLSLIPQSFENAELQDMAMEILPLDRLYSVAEERAEEEGERDNWGLQDYLIMELLRWFKQDYFTWVNSPPCETCGENGNVQFVRRENSTPEEQKYDASGTEVHQCSNCNTEIRFPRYNDLSKLMETRRGRCGEWAKCFAFFCRALGLRTRYIWNAEDHVWSEVYSERRKEWIHTDSCEEAWNSPTIYSQGWGKKMSYVVGFSGDGVTDVTRRYVRKADQQLPRTMVPDEQFKTILNSITSDIRQNLSPSEKEELKREDEAEERELASYNADEPQEAQMPRQSGSVEWTKARGEGGSDD.

Zn(2+) is bound by residues C129, C132, C163, and C166. The active-site Nucleophile is the C189. Residues H216 and D233 contribute to the active site. A substrate-binding site is contributed by E236. The segment at 300–356 is disordered; the sequence is IRQNLSPSEKEELKREDEAEERELASYNADEPQEAQMPRQSGSVEWTKARGEGGSDD. 2 stretches are compositionally biased toward basic and acidic residues: residues 307–316 and 346–356; these read SEKEELKRED and TKARGEGGSDD.

Belongs to the transglutaminase-like superfamily. PNGase family. It depends on Zn(2+) as a cofactor.

It is found in the cytoplasm. The catalysed reaction is Hydrolysis of an N(4)-(acetyl-beta-D-glucosaminyl)asparagine residue in which the glucosamine residue may be further glycosylated, to yield a (substituted) N-acetyl-beta-D-glucosaminylamine and a peptide containing an aspartate residue.. Its function is as follows. Specifically deglycosylates the denatured form of N-linked glycoproteins in the cytoplasm and assists their proteasome-mediated degradation. Cleaves the beta-aspartyl-glucosamine (GlcNAc) of the glycan and the amide side chain of Asn, converting Asn to Asp. Prefers proteins containing high-mannose over those bearing complex type oligosaccharides. Can recognize misfolded proteins in the endoplasmic reticulum that are exported to the cytosol to be destroyed and deglycosylate them, while it has no activity toward native proteins. Deglycosylation is a prerequisite for subsequent proteasome-mediated degradation of some, but not all, misfolded glycoproteins. In Yarrowia lipolytica (strain CLIB 122 / E 150) (Yeast), this protein is Peptide-N(4)-(N-acetyl-beta-glucosaminyl)asparagine amidase (PNG1).